The primary structure comprises 279 residues: Putative potassium channel regulatory protein (279 aa).

The region spanning 5–74 (ELVTLNVGGM…VRTSQLSLPS (70 aa)) is the BTB domain. The segment at 256 to 279 (ENSRQENYETETVQVKQAKPNKKR) is disordered.

It is found in the endoplasmic reticulum. Its function is as follows. Inhibits potassium fluxes in cells, possibly by retaining potassium channels in the cytoplasm. This Xenopus tropicalis (Western clawed frog) protein is Putative potassium channel regulatory protein (kcnrg).